We begin with the raw amino-acid sequence, 554 residues long: Oxygen-dependent choline dehydrogenase (554 aa).

4–33 (DYIIIGAGSAGNVLATRLTEDPNTTVLLLE) lines the FAD pocket. Catalysis depends on His-473, which acts as the Proton acceptor.

This sequence belongs to the GMC oxidoreductase family. It depends on FAD as a cofactor.

It carries out the reaction choline + A = betaine aldehyde + AH2. The catalysed reaction is betaine aldehyde + NAD(+) + H2O = glycine betaine + NADH + 2 H(+). It participates in amine and polyamine biosynthesis; betaine biosynthesis via choline pathway; betaine aldehyde from choline (cytochrome c reductase route): step 1/1. Functionally, involved in the biosynthesis of the osmoprotectant glycine betaine. Catalyzes the oxidation of choline to betaine aldehyde and betaine aldehyde to glycine betaine at the same rate. The chain is Oxygen-dependent choline dehydrogenase from Klebsiella pneumoniae (strain 342).